The primary structure comprises 258 residues: UPF0246 protein VV0659 (258 aa).

This sequence belongs to the UPF0246 family.

The chain is UPF0246 protein VV0659 from Vibrio vulnificus (strain YJ016).